The chain runs to 278 residues: Tryptophan synthase alpha chain (278 aa).

Catalysis depends on proton acceptor residues Glu50 and Asp61.

This sequence belongs to the TrpA family. Tetramer of two alpha and two beta chains.

It catalyses the reaction (1S,2R)-1-C-(indol-3-yl)glycerol 3-phosphate + L-serine = D-glyceraldehyde 3-phosphate + L-tryptophan + H2O. The protein operates within amino-acid biosynthesis; L-tryptophan biosynthesis; L-tryptophan from chorismate: step 5/5. In terms of biological role, the alpha subunit is responsible for the aldol cleavage of indoleglycerol phosphate to indole and glyceraldehyde 3-phosphate. The polypeptide is Tryptophan synthase alpha chain (Rhodopseudomonas palustris (strain BisA53)).